The chain runs to 416 residues: UDP-N-acetylglucosamine 1-carboxyvinyltransferase (416 aa).

22 to 23 (KN) is a phosphoenolpyruvate binding site. Arg92 serves as a coordination point for UDP-N-acetyl-alpha-D-glucosamine. Cys116 (proton donor) is an active-site residue. Position 116 is a 2-(S-cysteinyl)pyruvic acid O-phosphothioketal (Cys116). Residues 121-125 (RPVDQ), Asp304, and Ile326 each bind UDP-N-acetyl-alpha-D-glucosamine.

Belongs to the EPSP synthase family. MurA subfamily.

The protein localises to the cytoplasm. It catalyses the reaction phosphoenolpyruvate + UDP-N-acetyl-alpha-D-glucosamine = UDP-N-acetyl-3-O-(1-carboxyvinyl)-alpha-D-glucosamine + phosphate. It participates in cell wall biogenesis; peptidoglycan biosynthesis. Functionally, cell wall formation. Adds enolpyruvyl to UDP-N-acetylglucosamine. This Cupriavidus metallidurans (strain ATCC 43123 / DSM 2839 / NBRC 102507 / CH34) (Ralstonia metallidurans) protein is UDP-N-acetylglucosamine 1-carboxyvinyltransferase.